A 296-amino-acid polypeptide reads, in one-letter code: Ribosomal RNA small subunit methyltransferase A (296 aa).

S-adenosyl-L-methionine is bound by residues asparagine 30, leucine 32, glycine 57, glutamate 78, aspartate 103, and asparagine 128.

The protein belongs to the class I-like SAM-binding methyltransferase superfamily. rRNA adenine N(6)-methyltransferase family. RsmA subfamily.

Its subcellular location is the cytoplasm. It carries out the reaction adenosine(1518)/adenosine(1519) in 16S rRNA + 4 S-adenosyl-L-methionine = N(6)-dimethyladenosine(1518)/N(6)-dimethyladenosine(1519) in 16S rRNA + 4 S-adenosyl-L-homocysteine + 4 H(+). In terms of biological role, specifically dimethylates two adjacent adenosines (A1518 and A1519) in the loop of a conserved hairpin near the 3'-end of 16S rRNA in the 30S particle. May play a critical role in biogenesis of 30S subunits. This is Ribosomal RNA small subunit methyltransferase A from Macrococcus caseolyticus (strain JCSC5402) (Macrococcoides caseolyticum).